The primary structure comprises 520 residues: mRNA-capping enzyme subunit beta (520 aa).

The interval 1–185 is disordered; it reads MNVGSILNDD…PQPVFDDQDD (185 aa). Polar residues-rich tracts occupy residues 11 to 21 and 44 to 56; these read PPSSGNANGND and ITSM…SDST. Residues 92-108 show a composition bias toward low complexity; the sequence is SSSSVGSSEHSSARSSP. Composition is skewed to basic and acidic residues over residues 126 to 135 and 149 to 176; these read PATKTEKKAE and KLEE…KKEP.

It belongs to the fungal TPase family. Heterodimer. The mRNA-capping enzyme is composed of two separate chains alpha and beta, respectively a mRNA guanylyltransferase and an mRNA 5'-triphosphate monophosphatase. Requires Mg(2+) as cofactor.

The protein resides in the nucleus. It carries out the reaction a 5'-end triphospho-ribonucleoside in mRNA + H2O = a 5'-end diphospho-ribonucleoside in mRNA + phosphate + H(+). Functionally, first step of mRNA capping. Converts the 5'-triphosphate end of a nascent mRNA chain into a diphosphate end. This is mRNA-capping enzyme subunit beta (CET1) from Candida albicans (strain SC5314 / ATCC MYA-2876) (Yeast).